Consider the following 249-residue polypeptide: Probable transcriptional regulatory protein OTBS_0251 (249 aa).

This sequence belongs to the TACO1 family.

It is found in the cytoplasm. The polypeptide is Probable transcriptional regulatory protein OTBS_0251 (Orientia tsutsugamushi (strain Boryong) (Rickettsia tsutsugamushi)).